A 718-amino-acid chain; its full sequence is Catalase (718 aa).

Active-site residues include His103 and Asn176. Residue Tyr390 coordinates heme.

The protein belongs to the catalase family. It depends on heme as a cofactor.

The protein resides in the peroxisome matrix. The enzyme catalyses 2 H2O2 = O2 + 2 H2O. Its function is as follows. Catalyzes the degradation of hydrogen peroxide (H(2)O(2)) generated by peroxisomal oxidases to water and oxygen, thereby protecting cells from the toxic effects of hydrogen peroxide. This Blumeria hordei (Barley powdery mildew) protein is Catalase (CAT1).